Consider the following 690-residue polypeptide: BURP domain-containing protein 14 (690 aa).

Positions 1-26 are cleaved as a signal peptide; that stretch reads MAPPRHARLVAATIAVLLCHLPRSAA. The tract at residues 134–163 is disordered; it reads GSSWSKSSSDGDGAAAAAAPAGGGGGGGGG. The span at 135-153 shows a compositional bias: low complexity; the sequence is SSWSKSSSDGDGAAAAAAP. The span at 154–163 shows a compositional bias: gly residues; the sequence is AGGGGGGGGG. The N-linked (GlcNAc...) asparagine glycan is linked to N178. Positions 201 to 211 are enriched in gly residues; sequence SNGGGGGGGGV. Positions 201 to 232 are disordered; it reads SNGGGGGGGGVDSFRRYGKGSQGRNDSFTSYE. N-linked (GlcNAc...) asparagine glycosylation is found at N225, N317, N379, N432, N450, and N601. The BURP domain occupies 477-689; sequence FFRERDLVAG…FQGDMTWTVA (213 aa).

In terms of tissue distribution, expressed in panicles.

This is BURP domain-containing protein 14 (BURP14) from Oryza sativa subsp. japonica (Rice).